Consider the following 984-residue polypeptide: Vacuolar sorting protein 3 (984 aa).

The CNH domain maps to 21–339 (KIRALSLSPI…GCGPSLLAAD (319 aa)). Residues 663-844 (VLTSDKRTEE…YLDPQNGKEP (182 aa)) form a CHCR repeat.

It belongs to the TRAP1 family. As to quaternary structure, component of the class C core vacuole/endosome tethering (CORVET) complex. Their common core is composed of the class C Vps core proteins VPS11, VCL1, VPS18 and VPS33, which in CORVET further associates with VPS3. Interacts directly with VPS11. Binds to RABF2A and RABF2B.

It localises to the endosome membrane. It is found in the cytoplasm. In terms of biological role, essential protein required during embryogenesis. Believed to act as a component of the putative class C core vacuole/endosome tethering (CORVET) endosomal tethering complexes. CORVET is required for vacuolar transport of SYP22. Involved in root development. Plays a role in vesicle-mediated protein trafficking of the endocytic membrane transport pathway. The sequence is that of Vacuolar sorting protein 3 from Arabidopsis thaliana (Mouse-ear cress).